The chain runs to 868 residues: Probable beta-glucosidase F (868 aa).

An N-terminal signal peptide occupies residues 1–20; the sequence is MAHRWLILALVAAAAPRALA. The segment at 21–40 is disordered; sequence SPGPSLNERQSDDEPFSPPY. Asn-65, Asn-73, and Asn-257 each carry an N-linked (GlcNAc...) asparagine glycan. Residue Asp-285 is part of the active site. Asn-328, Asn-360, Asn-395, Asn-421, and Asn-726 each carry an N-linked (GlcNAc...) asparagine glycan. Residues 731 to 752 form a disordered region; sequence YPYPDGYSTDPQPPPRAGGAEG.

Belongs to the glycosyl hydrolase 3 family.

The protein resides in the secreted. It carries out the reaction Hydrolysis of terminal, non-reducing beta-D-glucosyl residues with release of beta-D-glucose.. The protein operates within glycan metabolism; cellulose degradation. Beta-glucosidases are one of a number of cellulolytic enzymes involved in the degradation of cellulosic biomass. Catalyzes the last step releasing glucose from the inhibitory cellobiose. The chain is Probable beta-glucosidase F (bglF) from Emericella nidulans (strain FGSC A4 / ATCC 38163 / CBS 112.46 / NRRL 194 / M139) (Aspergillus nidulans).